A 98-amino-acid chain; its full sequence is NADH-ubiquinone oxidoreductase chain 4L (98 aa).

3 helical membrane passes run 1 to 21 (MPFI…GLLI), 29 to 49 (SLLC…TMTL), and 61 to 81 (IILL…LILI).

The protein belongs to the complex I subunit 4L family. As to quaternary structure, core subunit of respiratory chain NADH dehydrogenase (Complex I) which is composed of 45 different subunits.

The protein resides in the mitochondrion inner membrane. It carries out the reaction a ubiquinone + NADH + 5 H(+)(in) = a ubiquinol + NAD(+) + 4 H(+)(out). Its function is as follows. Core subunit of the mitochondrial membrane respiratory chain NADH dehydrogenase (Complex I) which catalyzes electron transfer from NADH through the respiratory chain, using ubiquinone as an electron acceptor. Part of the enzyme membrane arm which is embedded in the lipid bilayer and involved in proton translocation. The polypeptide is NADH-ubiquinone oxidoreductase chain 4L (MT-ND4L) (Cebus albifrons (White-fronted capuchin)).